A 147-amino-acid chain; its full sequence is Protein phosphatase 1 regulatory subunit 14A (147 aa).

Residues 1-11 are compositionally biased toward basic residues; that stretch reads MAAQRLGKRVL. The segment at 1–36 is disordered; that stretch reads MAAQRLGKRVLSKLQSPSRARGPGGSPSGLQKRHAR. Position 26 is a phosphoserine (serine 26). The tract at residues 35 to 120 is inhibitory; sequence ARVTVKYDRR…LLAKLRGLHK (86 aa). Threonine 38 is modified (phosphothreonine; by PKC). The disordered stretch occupies residues 118–147; sequence LHKQPGFPQPSPSDDPSLSPRQDRAHTAPP. Phosphoserine is present on residues serine 128, serine 134, and serine 136. The segment covering 138–147 has biased composition (basic and acidic residues); it reads RQDRAHTAPP.

Belongs to the PP1 inhibitor family.

The protein localises to the cytoplasm. Inhibitor of PPP1CA. Has over 1000-fold higher inhibitory activity when phosphorylated, creating a molecular switch for regulating the phosphorylation status of PPP1CA substrates and smooth muscle contraction. The chain is Protein phosphatase 1 regulatory subunit 14A (Ppp1r14a) from Mus musculus (Mouse).